The chain runs to 200 residues: ADP-ribosylation factor-like protein 4A (200 aa).

Gly-2 carries N-myristoyl glycine lipidation. Residues 27 to 34, 75 to 79, and 134 to 137 each bind GTP; these read GLDCAGKT, DVGGQ, and NKQD.

The protein belongs to the small GTPase superfamily. Arf family. In terms of assembly, interacts with CYTH2. Interacts with KPNA2; the interaction is direct. Does not interact with ARL4A. Post-translationally, myristoylated.

The protein resides in the cell membrane. The protein localises to the cytoplasm. It is found in the nucleus. Its subcellular location is the nucleolus. In terms of biological role, small GTP-binding protein which cycles between an inactive GDP-bound and an active GTP-bound form, and the rate of cycling is regulated by guanine nucleotide exchange factors (GEF) and GTPase-activating proteins (GAP). GTP-binding protein that does not act as an allosteric activator of the cholera toxin catalytic subunit. Recruits CYTH1, CYTH2, CYTH3 and CYTH4 to the plasma membrane in GDP-bound form. The sequence is that of ADP-ribosylation factor-like protein 4A (ARL4A) from Homo sapiens (Human).